Reading from the N-terminus, the 1847-residue chain is Cilia- and flagella-associated protein 65 (1847 aa).

The helical transmembrane segment at 112-132 threads the bilayer; that stretch reads FFTIIPQPIFLSPGITLTLPI. Residues 805 to 914 enclose the MSP domain; the sequence is DLKLDTHKSI…VHYRIRLVGM (110 aa). Residues 1457–1483 adopt a coiled-coil conformation; that stretch reads QRELMRQYHKELQEWNEEKARQEVEFT. The disordered stretch occupies residues 1668 to 1721; the sequence is YEGRKSKEQEEDLFGKMPGGQEDDEEEEEDEEEAEEEEEEIEEEMSKDEEDIDK. The span at 1688 to 1720 shows a compositional bias: acidic residues; sequence QEDDEEEEEDEEEAEEEEEEIEEEMSKDEEDID.

This sequence belongs to the CFAP65 family. As to quaternary structure, interacts with CFAP47. In terms of tissue distribution, predominantly expressed in testis. Highly expressed in round and elongating spermatids. Expressed also in certain ciliated organs, such as the brain, lung and kidney.

Its subcellular location is the cell projection. The protein resides in the cilium. The protein localises to the flagellum membrane. It localises to the cytoplasmic vesicle. It is found in the secretory vesicle. Its subcellular location is the acrosome membrane. The protein resides in the cytoplasm. In terms of biological role, plays a role in flagellar formation and sperm motility. The sequence is that of Cilia- and flagella-associated protein 65 from Mus musculus (Mouse).